The chain runs to 1091 residues: Voltage-dependent calcium channel subunit alpha-2/delta-1 (1091 aa).

The first 24 residues, 1–24, serve as a signal peptide directing secretion; that stretch reads MAAGCLLALTLTLFQSWLIGPSSE. At 25–1061 the chain is on the extracellular side; sequence EPFPSPVTIK…VLEDYTDCGG (1037 aa). N-linked (GlcNAc...) asparagine glycosylation is present at asparagine 92. Position 119 is a phosphoserine (serine 119). Residues asparagine 136 and asparagine 184 are each glycosylated (N-linked (GlcNAc...) asparagine). The 178-residue stretch at 252–429 folds into the VWFA domain; that stretch reads DMLILVDVSG…INTQEYLDVL (178 aa). Aspartate 258, serine 260, and serine 262 together coordinate a divalent metal cation. The MIDAS-like motif signature appears at 258-262; sequence DVSGS. N-linked (GlcNAc...) asparagine glycosylation is found at asparagine 323 and asparagine 347. Residues cysteine 403 and cysteine 1047 are joined by a disulfide bond. The 92-residue stretch at 445 to 536 folds into the Cache domain; sequence WTNVYLDALE…QPKNPKSQEP (92 aa). 4 N-linked (GlcNAc...) asparagine glycosylation sites follow: asparagine 593, asparagine 769, asparagine 876, and asparagine 973. The helical transmembrane segment at 1062 to 1082 threads the bilayer; sequence VSGLNPSLWSIFGLQFILLWL. The Cytoplasmic segment spans residues 1083–1091; it reads VSGSRHYLW.

This sequence belongs to the calcium channel subunit alpha-2/delta family. Dimer formed of alpha-2-1 and delta-1 chains; disulfide-linked. Voltage-dependent calcium channels are multisubunit complexes, consisting of alpha-1 (CACNA1), alpha-2 (CACNA2D), beta (CACNB) and delta (CACNA2D) subunits in a 1:1:1:1 ratio. Proteolytically processed into subunits alpha-2-1 and delta-1 that are disulfide-linked.

It localises to the membrane. The protein resides in the cell membrane. Functionally, the alpha-2/delta subunit of voltage-dependent calcium channels regulates calcium current density and activation/inactivation kinetics of the calcium channel. Plays an important role in excitation-contraction coupling. This is Voltage-dependent calcium channel subunit alpha-2/delta-1 (Cacna2d1) from Rattus norvegicus (Rat).